The following is a 253-amino-acid chain: 3-deoxy-manno-octulosonate cytidylyltransferase (253 aa).

Belongs to the KdsB family.

It is found in the cytoplasm. The catalysed reaction is 3-deoxy-alpha-D-manno-oct-2-ulosonate + CTP = CMP-3-deoxy-beta-D-manno-octulosonate + diphosphate. Its pathway is nucleotide-sugar biosynthesis; CMP-3-deoxy-D-manno-octulosonate biosynthesis; CMP-3-deoxy-D-manno-octulosonate from 3-deoxy-D-manno-octulosonate and CTP: step 1/1. It participates in bacterial outer membrane biogenesis; lipopolysaccharide biosynthesis. Its function is as follows. Activates KDO (a required 8-carbon sugar) for incorporation into bacterial lipopolysaccharide in Gram-negative bacteria. The chain is 3-deoxy-manno-octulosonate cytidylyltransferase from Proteus mirabilis (strain HI4320).